Here is a 220-residue protein sequence, read N- to C-terminus: Octanoyltransferase (220 aa).

A BPL/LPL catalytic domain is found at 27-208 (PGTADEIWLC…QLARAHGQAV (182 aa)). Substrate-binding positions include 66–73 (RGGQVTYH), 139–141 (ALG), and 152–154 (GLA). Cys-170 acts as the Acyl-thioester intermediate in catalysis.

It belongs to the LipB family.

It localises to the cytoplasm. The enzyme catalyses octanoyl-[ACP] + L-lysyl-[protein] = N(6)-octanoyl-L-lysyl-[protein] + holo-[ACP] + H(+). It functions in the pathway protein modification; protein lipoylation via endogenous pathway; protein N(6)-(lipoyl)lysine from octanoyl-[acyl-carrier-protein]: step 1/2. Functionally, catalyzes the transfer of endogenously produced octanoic acid from octanoyl-acyl-carrier-protein onto the lipoyl domains of lipoate-dependent enzymes. Lipoyl-ACP can also act as a substrate although octanoyl-ACP is likely to be the physiological substrate. The sequence is that of Octanoyltransferase from Bordetella pertussis (strain Tohama I / ATCC BAA-589 / NCTC 13251).